We begin with the raw amino-acid sequence, 290 residues long: GTPase Era (290 aa).

The Era-type G domain occupies 2-169 (KSGFAAILGR…KNKIYENFSE (168 aa)). The tract at residues 10–17 (GRPSTGKS) is G1. 10–17 (GRPSTGKS) lines the GTP pocket. Residues 36-40 (QTTRN) form a G2 region. The tract at residues 57-60 (DTPG) is G3. GTP-binding positions include 57-61 (DTPGF) and 119-122 (NKID). The tract at residues 119–122 (NKID) is G4. Positions 148–150 (ISA) are G5. The KH type-2 domain maps to 200-276 (LKEELPYSLY…NLFLQVKLKK (77 aa)).

The protein belongs to the TRAFAC class TrmE-Era-EngA-EngB-Septin-like GTPase superfamily. Era GTPase family. As to quaternary structure, monomer.

Its subcellular location is the cytoplasm. It localises to the cell inner membrane. An essential GTPase that binds both GDP and GTP, with rapid nucleotide exchange. Plays a role in 16S rRNA processing and 30S ribosomal subunit biogenesis and possibly also in cell cycle regulation and energy metabolism. The chain is GTPase Era from Borreliella burgdorferi (strain ATCC 35210 / DSM 4680 / CIP 102532 / B31) (Borrelia burgdorferi).